A 361-amino-acid chain; its full sequence is Methyltransferase LUC1 (361 aa).

Residues Y18, N66, D89, S126, and F127 each coordinate S-adenosyl-L-homocysteine. Residues Q156 and F233 each coordinate Mg(2+).

Belongs to the methyltransferase superfamily. Type-7 methyltransferase family. The cofactor is Mg(2+).

It participates in mycotoxin biosynthesis. In terms of biological role, methyltransferase; part of the gene cluster that mediates the biosynthesis of the mycotoxin lucilactaene and the lucilactaene-related compound NG-391 that act as cell cycle inhibitors with potent growth inhibitory activity against malarial parasites, moderate growth inhibitory activity against cancer cells, and no activity against bacteria and fungi. LUC1 performs the last step of the pathway and methylates the hydroxyl group of demethyllucilactaene at C-21 to yeald lucilactaene. The pathway begins with the hybrid PKS-NRPS synthetase LUC5 which is responsible for the condensation of one acetyl-coenzyme A (CoA) unit with six malonyl-CoA units and the amide linkage of the arising heptaketide and homoserine, subsequently releasing the first intermediate prelucilactaene B. Both the cytochrome P450 monooxygenase LUC2 and the hydrolase LUC6 function in parallel in modification of prelucilactaene B. LUC6 may catalyze the 2-pyrrolidone ring formation to form prelucilactaene C from prelucilactaene B, followed by C-15 hydroxylation by the same enzyme to give prelucilactaene D, which is then converted to prelucilactaene E by epoxidation, and finally to prelucilactaene F by cyclization. Prelucilactane D, prelucilactaene E, and prelucilactaene F can be converted to dihydrolucilactaene, NG391, and lucilactaene, respectively, via C-20 methyl group hydroxylation by the cytochrome P450 monooxygenase LUC2. However, LUC2, unlike FUS8 in fusarin C biosynthesis, is not enough for the full oxidation of the C-20 methyl group into carboxylic acid, which is a prerequisite for the final methylation step. The aldehyde dehydrogenase LUC3 is involved in the biosynthesis by further oxidation of the C-20 alcoholic analog prelucilactaene G into a carboxylic derivative. This unidentified carboxylic derivative may be converted to demethyllucilactaene. As the last step, the methyltransferase LUC1 methylates the hydroxyl group at C-21 of demethyllucilactaene to generate lucilactaene. This is Methyltransferase LUC1 from Fusarium sp.